Reading from the N-terminus, the 479-residue chain is M-phase inducer phosphatase (479 aa).

The interval Met-182 to Pro-218 is disordered. Positions Glu-199 to Glu-209 are enriched in basic and acidic residues. The Rhodanese domain maps to Lys-316 to Glu-432. Residue Cys-379 is part of the active site. At Ser-455 the chain carries Phosphoserine.

This sequence belongs to the MPI phosphatase family.

It catalyses the reaction O-phospho-L-tyrosyl-[protein] + H2O = L-tyrosyl-[protein] + phosphate. Functionally, this protein functions as a dosage-dependent inducer in mitotic control. It is a tyrosine protein phosphatase required for progression of the cell cycle. It may directly dephosphorylate Cdk1 and activate the Cdk1 activity. This is M-phase inducer phosphatase (stg) from Drosophila melanogaster (Fruit fly).